The primary structure comprises 208 residues: Mediator of RNA polymerase II transcription subunit 18 (208 aa).

A Phosphoserine modification is found at Ser-66.

Belongs to the Mediator complex subunit 18 family. Component of the Mediator complex, which is composed of MED1, MED4, MED6, MED7, MED8, MED9, MED10, MED11, MED12, MED13, MED13L, MED14, MED15, MED16, MED17, MED18, MED19, MED20, MED21, MED22, MED23, MED24, MED25, MED26, MED27, MED29, MED30, MED31, CCNC, CDK8 and CDC2L6/CDK11. The MED12, MED13, CCNC and CDK8 subunits form a distinct module termed the CDK8 module. Mediator containing the CDK8 module is less active than Mediator lacking this module in supporting transcriptional activation. Individual preparations of the Mediator complex lacking one or more distinct subunits have been variously termed ARC, CRSP, DRIP, PC2, SMCC and TRAP.

The protein localises to the nucleus. In terms of biological role, component of the Mediator complex, a coactivator involved in the regulated transcription of nearly all RNA polymerase II-dependent genes. Mediator functions as a bridge to convey information from gene-specific regulatory proteins to the basal RNA polymerase II transcription machinery. Mediator is recruited to promoters by direct interactions with regulatory proteins and serves as a scaffold for the assembly of a functional preinitiation complex with RNA polymerase II and the general transcription factors. The chain is Mediator of RNA polymerase II transcription subunit 18 (MED18) from Homo sapiens (Human).